We begin with the raw amino-acid sequence, 631 residues long: Probable sulfate transporter 3.3 (631 aa).

Over 1 to 69 (MEVHKVVAPP…EYSFSLLKSD (69 aa)) the chain is Cytoplasmic. Residues 70-90 (VVSGLTIASLAIPQGISYAKL) form a helical membrane-spanning segment. At 91-92 (AN) the chain is on the extracellular side. A helical membrane pass occupies residues 93–113 (LPPIVGLYSSFVPPLVYAVLG). Residues 114 to 117 (SSRD) are Cytoplasmic-facing. Residues 118–138 (LAVGPVSIASLILGSMLRQQV) traverse the membrane as a helical segment. At 139 to 144 (SPVDDP) the chain is on the extracellular side. Residues 145 to 165 (VLFLQLAFSSTFFAGLFQASL) form a helical membrane-spanning segment. Residues 166–171 (GILRLG) lie on the Cytoplasmic side of the membrane. The helical transmembrane segment at 172-192 (FIIDFLSKATLIGFMGGAAII) threads the bilayer. The Extracellular segment spans residues 193-223 (VSLQQLKGLLGITHFTKHMSVVPVLSSVFQH). The chain crosses the membrane as a helical span at residues 224–244 (TNEWSWQTIVMGVCFLLFLLS). Over 245 to 256 (TRHLSMKKPKLF) the chain is Cytoplasmic. The chain crosses the membrane as a helical span at residues 257–277 (WVSAGAPLLSVIVSTLLVFVF). Residues 278-309 (RAERHGISVIGKLPEGLNPPSWNMLQFHGSHL) lie on the Extracellular side of the membrane. Residues 310–330 (ALVAKTGLVTGIVSLTEGIAV) traverse the membrane as a helical segment. Residues 331 to 347 (GRTFAALKNYHVDGNKE) lie on the Cytoplasmic side of the membrane. Residues 348-368 (MIAIGLMNVVGSATSCYVTTG) form a helical membrane-spanning segment. Residues 369–384 (AFSRSAVNNNAGAKTA) are Extracellular-facing. Residues 385–405 (VSNIVMSVTVMVTLLFLMPLF) traverse the membrane as a helical segment. Residues 406–410 (EYTPN) lie on the Cytoplasmic side of the membrane. Residues 411–431 (VVLGAIIVTAVIGLIDLPAAC) form a helical membrane-spanning segment. Over 432 to 441 (HIWKIDKFDF) the chain is Extracellular. Residues 442 to 462 (LVMLCAFFGVIFLSVQNGLAI) traverse the membrane as a helical segment. Over 463–631 (AVGLSLFKIL…SLKGPSLSNV (169 aa)) the chain is Cytoplasmic. One can recognise an STAS domain in the interval 497–621 (HYKEAQRIPG…LTVAEAVASL (125 aa)).

Belongs to the SLC26A/SulP transporter (TC 2.A.53) family. Expressed only in leaves.

It is found in the membrane. Its function is as follows. H(+)/sulfate cotransporter that may play a role in the regulation of sulfate assimilation. This Arabidopsis thaliana (Mouse-ear cress) protein is Probable sulfate transporter 3.3 (SULTR3;3).